A 388-amino-acid chain; its full sequence is Chorismate synthase (388 aa).

Arg39 and Arg45 together coordinate NADP(+). The disordered stretch occupies residues 95–118 (EKNEKSRRVSRPRPGHADLVGGMK). FMN is bound by residues 130–132 (RSS), 251–252 (NA), Gly296, 311–315 (KPIPT), and Arg337.

The protein belongs to the chorismate synthase family. Homotetramer. FMNH2 is required as a cofactor.

It catalyses the reaction 5-O-(1-carboxyvinyl)-3-phosphoshikimate = chorismate + phosphate. The protein operates within metabolic intermediate biosynthesis; chorismate biosynthesis; chorismate from D-erythrose 4-phosphate and phosphoenolpyruvate: step 7/7. In terms of biological role, catalyzes the anti-1,4-elimination of the C-3 phosphate and the C-6 proR hydrogen from 5-enolpyruvylshikimate-3-phosphate (EPSP) to yield chorismate, which is the branch point compound that serves as the starting substrate for the three terminal pathways of aromatic amino acid biosynthesis. This reaction introduces a second double bond into the aromatic ring system. The polypeptide is Chorismate synthase (Listeria welshimeri serovar 6b (strain ATCC 35897 / DSM 20650 / CCUG 15529 / CIP 8149 / NCTC 11857 / SLCC 5334 / V8)).